The sequence spans 812 residues: Probable phosphoketolase (812 aa).

It belongs to the XFP family. Thiamine diphosphate serves as cofactor.

This is Probable phosphoketolase from Thermosynechococcus vestitus (strain NIES-2133 / IAM M-273 / BP-1).